The following is a 229-amino-acid chain: Small ribosomal subunit protein uS5 (229 aa).

One can recognise an S5 DRBM domain in the interval 61–124 (LEEQVLDVKL…AHAKLSLIKV (64 aa)).

The protein belongs to the universal ribosomal protein uS5 family. As to quaternary structure, part of the 30S ribosomal subunit. Contacts protein S4.

Its function is as follows. With S4 and S12 plays an important role in translational accuracy. The sequence is that of Small ribosomal subunit protein uS5 from Methanococcus maripaludis (strain C6 / ATCC BAA-1332).